Consider the following 404-residue polypeptide: Glucose-1-phosphate adenylyltransferase (404 aa).

Alpha-D-glucose 1-phosphate-binding positions include Y99, G164, E179–K180, and S197.

It belongs to the bacterial/plant glucose-1-phosphate adenylyltransferase family.

It catalyses the reaction alpha-D-glucose 1-phosphate + ATP + H(+) = ADP-alpha-D-glucose + diphosphate. It participates in capsule biogenesis; capsule polysaccharide biosynthesis. It functions in the pathway glycan biosynthesis; glycogen biosynthesis. Its function is as follows. Involved in the biosynthesis of ADP-glucose, a building block, required in the biosynthesis of maltose-1-phosphate (M1P) and in the elongation reactions to produce linear alpha-1,4-glucans. Catalyzes the reaction between ATP and alpha-D-glucose 1-phosphate (G1P) to produce pyrophosphate and ADP-Glc. The chain is Glucose-1-phosphate adenylyltransferase from Mycobacterium bovis (strain ATCC BAA-935 / AF2122/97).